The primary structure comprises 387 residues: Alkanesulfonate monooxygenase (387 aa).

Residues 365–387 (HNSGPFGETVGNDYRPSRLASQS) are disordered.

The protein belongs to the SsuD family.

The enzyme catalyses an alkanesulfonate + FMNH2 + O2 = an aldehyde + FMN + sulfite + H2O + 2 H(+). In terms of biological role, catalyzes the desulfonation of aliphatic sulfonates. The protein is Alkanesulfonate monooxygenase of Bradyrhizobium diazoefficiens (strain JCM 10833 / BCRC 13528 / IAM 13628 / NBRC 14792 / USDA 110).